A 311-amino-acid polypeptide reads, in one-letter code: Glutaminase (311 aa).

Substrate-binding residues include S66, N116, E162, N169, Y193, Y245, and V263.

Belongs to the glutaminase family. In terms of assembly, homotetramer.

It carries out the reaction L-glutamine + H2O = L-glutamate + NH4(+). This chain is Glutaminase, found in Rhodopseudomonas palustris (strain ATCC BAA-98 / CGA009).